The primary structure comprises 178 residues: Endoribonuclease YbeY (178 aa).

H118, H122, and H128 together coordinate Zn(2+).

The protein belongs to the endoribonuclease YbeY family. Requires Zn(2+) as cofactor.

It is found in the cytoplasm. Single strand-specific metallo-endoribonuclease involved in late-stage 70S ribosome quality control and in maturation of the 3' terminus of the 16S rRNA. The chain is Endoribonuclease YbeY from Mycobacterium leprae (strain Br4923).